The sequence spans 371 residues: Sporulation-specific protein 2 (371 aa).

It is found in the spore wall. Its function is as follows. Essential for sporulation and seems to have a role at the time of, or after, initiation of nuclear division. Appears to have a role in outer spore wall formation. This chain is Sporulation-specific protein 2 (SSP2), found in Saccharomyces cerevisiae (strain ATCC 204508 / S288c) (Baker's yeast).